A 323-amino-acid chain; its full sequence is tRNA-modifying protein YgfZ (323 aa).

The folate site is built by Trp29 and Trp182.

It belongs to the tRNA-modifying YgfZ family.

The protein localises to the cytoplasm. Its function is as follows. Folate-binding protein involved in regulating the level of ATP-DnaA and in the modification of some tRNAs. It is probably a key factor in regulatory networks that act via tRNA modification, such as initiation of chromosomal replication. The polypeptide is tRNA-modifying protein YgfZ (Vibrio cholerae serotype O1 (strain M66-2)).